A 238-amino-acid polypeptide reads, in one-letter code: Probable transcriptional regulatory protein LACR_0237 (238 aa).

It belongs to the TACO1 family. YeeN subfamily.

It is found in the cytoplasm. This Lactococcus lactis subsp. cremoris (strain SK11) protein is Probable transcriptional regulatory protein LACR_0237.